Reading from the N-terminus, the 338-residue chain is Short-chain dehydrogenase/reductase phmF (338 aa).

NADP(+) contacts are provided by leucine 46, arginine 71, aspartate 96, and asparagine 123. The Proton donor role is filled by serine 177. NADP(+) contacts are provided by tyrosine 211 and lysine 215. The Proton acceptor role is filled by tyrosine 211. The Lowers pKa of active site Tyr role is filled by lysine 215.

The protein belongs to the short-chain dehydrogenases/reductases (SDR) family.

The protein operates within mycotoxin biosynthesis. Short-chain dehydrogenase/reductase; part of the gene cluster that mediates the biosynthesis of the mycotoxins phomacins, leucine-derived cytochalasans with potent actin polymerization-inhibitory activities and monocot-specific antigerminative activities. The first step in the pathway is catalyzed by the hybrid PKS-NRPS phmA, assisted by the enoyl reductase phmE, that are responsible for fusion of the leucine precursor and the polyketide backbone to produce a 2-pyrrolidone intermediate. The polyketide synthase module (PKS) of phmA is responsible for the synthesis of the polyketide backbone and the downstream nonribosomal peptide synthetase (NRPS) amidates the carboxyl end of the polyketide with the leucine precursor. Because phmA lacks a designated enoylreductase (ER) domain, the required activity is provided the enoyl reductase phmE. Reduction by the hydrolyase phmG, followed by dehydration and intra-molecular Diels-Alder cyclization by the Diels-Alderase phmD then yield the required isoindolone-fused macrocycle. A number of oxidative steps catalyzed by the tailoring cytochrome P450 monooxygenase phmB, the FAD-linked oxidoreductase phmC and the short-chain dehydrogenase/reductase phmF, are further required to afford the final products, phomacin D and phomacin E. This is Short-chain dehydrogenase/reductase phmF from Phaeosphaeria nodorum (strain SN15 / ATCC MYA-4574 / FGSC 10173) (Glume blotch fungus).